Here is a 437-residue protein sequence, read N- to C-terminus: O-methyltransferase 10 (437 aa).

Positions 259, 282, 315, and 316 each coordinate S-adenosyl-L-methionine. H335 (proton acceptor) is an active-site residue.

Belongs to the class I-like SAM-binding methyltransferase superfamily. Cation-independent O-methyltransferase family. COMT subfamily.

It catalyses the reaction (3,5-dichloro-2,4,6-trihydroxyphenyl)hexan-1-one + S-adenosyl-L-methionine = 1-(3,5-dichloro-2,6-dihydroxy-4-methoxyphenyl)hexan-1-one + S-adenosyl-L-homocysteine + H(+). This chain is O-methyltransferase 10 (omt10), found in Dictyostelium discoideum (Social amoeba).